The sequence spans 161 residues: Phosphopantetheine adenylyltransferase (161 aa).

S9 contacts substrate. Residues 9 to 10 (SF) and H17 each bind ATP. Substrate is bound by residues K41, L73, and K87. Residues 88 to 90 (GLR), E98, and 122 to 128 (YSFVSSS) contribute to the ATP site.

The protein belongs to the bacterial CoaD family. Homohexamer. Mg(2+) serves as cofactor.

Its subcellular location is the cytoplasm. The enzyme catalyses (R)-4'-phosphopantetheine + ATP + H(+) = 3'-dephospho-CoA + diphosphate. It functions in the pathway cofactor biosynthesis; coenzyme A biosynthesis; CoA from (R)-pantothenate: step 4/5. Reversibly transfers an adenylyl group from ATP to 4'-phosphopantetheine, yielding dephospho-CoA (dPCoA) and pyrophosphate. This Mycobacteroides abscessus (strain ATCC 19977 / DSM 44196 / CCUG 20993 / CIP 104536 / JCM 13569 / NCTC 13031 / TMC 1543 / L948) (Mycobacterium abscessus) protein is Phosphopantetheine adenylyltransferase.